A 1758-amino-acid polypeptide reads, in one-letter code: Y' element ATP-dependent helicase YJL225C (1758 aa).

The region spanning 668–845 (EIYMADTPSV…LQRIGLTGLA (178 aa)) is the Helicase ATP-binding domain. 681-688 (APPGYGKT) is an ATP binding site. The Helicase C-terminal domain maps to 900-1051 (ALKLLLALFE…EFYGLESKKG (152 aa)). Residues 1142 to 1360 (NVRTNATTNA…ATTTESTNAS (219 aa)) show a composition bias toward low complexity. Residues 1142–1384 (NVRTNATTNA…RFHPVTDINK (243 aa)) form a disordered region. Residues 1361–1384 (AKEDANKDGNAEDNRFHPVTDINK) show a composition bias toward basic and acidic residues.

This sequence belongs to the helicase family. Yeast subtelomeric Y' repeat subfamily.

Its function is as follows. Catalyzes DNA unwinding and is involved in telomerase-independent telomere maintenance. This Saccharomyces cerevisiae (strain ATCC 204508 / S288c) (Baker's yeast) protein is Y' element ATP-dependent helicase YJL225C.